The chain runs to 222 residues: ATP-dependent dethiobiotin synthetase BioD (222 aa).

12–17 (DVGKTF) serves as a coordination point for ATP. Position 16 (T16) interacts with Mg(2+). K37 is a catalytic residue. Residue S41 participates in substrate binding. ATP is bound by residues D54 and 113-116 (EGAG). Mg(2+) contacts are provided by D54 and E113.

Belongs to the dethiobiotin synthetase family. As to quaternary structure, homodimer. It depends on Mg(2+) as a cofactor.

Its subcellular location is the cytoplasm. It catalyses the reaction (7R,8S)-7,8-diammoniononanoate + CO2 + ATP = (4R,5S)-dethiobiotin + ADP + phosphate + 3 H(+). It participates in cofactor biosynthesis; biotin biosynthesis; biotin from 7,8-diaminononanoate: step 1/2. Functionally, catalyzes a mechanistically unusual reaction, the ATP-dependent insertion of CO2 between the N7 and N8 nitrogen atoms of 7,8-diaminopelargonic acid (DAPA, also called 7,8-diammoniononanoate) to form a ureido ring. This Anoxybacillus flavithermus (strain DSM 21510 / WK1) protein is ATP-dependent dethiobiotin synthetase BioD.